We begin with the raw amino-acid sequence, 378 residues long: GDP-mannose 3,5-epimerase 1 (378 aa).

NAD(+) is bound by residues 36–62 (GAGG…SDWK), Asp-60, and Asp-80. Residues Gly-105 and 145-147 (SAC) each bind substrate. Residues Tyr-175 and Lys-179 each coordinate NAD(+). Catalysis depends on Tyr-175, which acts as the Proton acceptor. Substrate contacts are provided by residues Asn-204, 217-219 (EKA), Lys-226, 242-244 (QTR), Arg-307, and Ser-357.

This sequence belongs to the NAD(P)-dependent epimerase/dehydratase family. As to quaternary structure, homodimer. It depends on NAD(+) as a cofactor.

It carries out the reaction GDP-alpha-D-mannose = GDP-beta-L-gulose. The enzyme catalyses GDP-beta-L-gulose = GDP-beta-L-galactose. It participates in cofactor biosynthesis; L-ascorbate biosynthesis via GDP-alpha-D-mannose pathway; L-ascorbate from GDP-alpha-D-mannose: step 1/5. With respect to regulation, strongly activated by NAD. Activated by NADP. Slightly activated by NADH and NADPH. Inhibited by GDP. In terms of biological role, catalyzes a reversible epimerization of GDP-D-mannose that precedes the committed step in the biosynthesis of vitamin C (L-ascorbate), resulting in the hydrolysis of the highly energetic glycosyl-pyrophosphoryl linkage. Able to catalyze 2 distinct epimerization reactions and can release both GDP-L-galactose and GDP-L-gulose from GDP-mannose. The protein is GDP-mannose 3,5-epimerase 1 (GME-1) of Oryza sativa subsp. japonica (Rice).